The following is a 264-amino-acid chain: Apolipoprotein A-I (264 aa).

The N-terminal stretch at 1 to 18 is a signal peptide; that stretch reads MKAVVLAVAVLFLTGSQA. Tandem repeats lie at residues 67-88 and 89-110. The segment at 67–264 is 10 X approximate tandem repeats; that stretch reads LNLLENWDTF…DEATQKLNTQ (198 aa). Methionine 109 bears the Methionine sulfoxide mark. A 3; half-length repeat occupies 111–121; it reads KDLEEVKQKVQ. 3 consecutive repeat copies span residues 122-143, 144-165, and 166-187. A 7; truncated repeat occupies 188–207; that stretch reads PYSDQMRDRLAERLTALRDN. A Methionine sulfoxide modification is found at methionine 193. Repeat unit 8 spans residues 208–229; it reads PKLAEYHARATEHLKKLGEKTK. One copy of the 9; half-length repeat lies at 230 to 240; sequence PTLEDLRQGLM. Methionine 240 is modified (methionine sulfoxide). Copy 10 of the repeat occupies 241 to 264; the sequence is PWLESLKAKALSVLDEATQKLNTQ.

Belongs to the apolipoprotein A1/A4/E family. As to quaternary structure, homodimer. Interacts with APOA1BP and CLU. Component of a sperm activating protein complex (SPAP), consisting of APOA1, an immunoglobulin heavy chain, an immunoglobulin light chain and albumin. Interacts with NDRG1. Interacts with SCGB3A2. Interacts with NAXE and YJEFN3. In terms of processing, glycosylated. Palmitoylated. Post-translationally, phosphorylation sites are present in the extracellular medium.

Its subcellular location is the secreted. In terms of biological role, participates in the reverse transport of cholesterol from tissues to the liver for excretion by promoting cholesterol efflux from tissues and by acting as a cofactor for the lecithin cholesterol acyltransferase (LCAT). As part of the SPAP complex, activates spermatozoa motility. In Nannospalax galili (Northern Israeli blind subterranean mole rat), this protein is Apolipoprotein A-I (Apoa1).